Reading from the N-terminus, the 468-residue chain is Tubulin gamma chain (468 aa).

142–148 (AGGTGSG) serves as a coordination point for GTP.

It belongs to the tubulin family.

It is found in the cytoplasm. The protein resides in the cytoskeleton. Its subcellular location is the microtubule organizing center. Tubulin is the major constituent of microtubules. The gamma chain is found at microtubule organizing centers (MTOC) such as the spindle poles, suggesting that it is involved in the minus-end nucleation of microtubule assembly. This chain is Tubulin gamma chain (TUBG), found in Chlamydomonas reinhardtii (Chlamydomonas smithii).